An 884-amino-acid chain; its full sequence is Formin-like protein 11 (884 aa).

The first 18 residues, 1-18 (MVYFRQIFLMIIVVSLHC), serve as a signal peptide directing secretion. The tract at residues 89 to 143 (AESASFSPWPAPSPSPFPNGGPIESPAYPPAPPRPIPPHLRRPLPQRTHPLEQPE) is disordered. Composition is skewed to pro residues over residues 97–107 (WPAPSPSPFPN) and 115–126 (AYPPAPPRPIPP). A helical membrane pass occupies residues 158-178 (ILVPVVASTASAIGFVVCVVG). 3 disordered regions span residues 307 to 384 (SSDD…FSNK), 416 to 469 (SFPI…APLP), and 512 to 532 (MQSS…GKHL). Over residues 329–343 (SNASSASGSVNVGSS) the composition is skewed to low complexity. A compositionally biased stretch (basic and acidic residues) spans 346–358 (FSEHKLDIPECSR). Composition is skewed to pro residues over residues 367–379 (APPP…PPLP) and 425–436 (QPRPPPPPPPPQ). The region spanning 461 to 884 (LGKDGAPLPK…NSPSPLAPFR (424 aa)) is the FH2 domain.

It belongs to the formin-like family. Class-I subfamily.

It is found in the membrane. Functionally, might be involved in the organization and polarity of the actin cytoskeleton. The protein is Formin-like protein 11 (FH11) of Arabidopsis thaliana (Mouse-ear cress).